The sequence spans 119 residues: uncharacterized protein (119 aa).

Transmembrane regions (helical) follow at residues 53–73 (AATI…SFLA) and 92–112 (FITH…WFLF).

Its subcellular location is the membrane. This is an uncharacterized protein from Saccharomyces cerevisiae (strain ATCC 204508 / S288c) (Baker's yeast).